Consider the following 344-residue polypeptide: Serine/arginine-rich splicing factor 6 (344 aa).

The RRM 1 domain maps to 1-72 (MPRVYIGRLS…ERVIVEHARG (72 aa)). A phosphoserine mark is found at Ser-45, Ser-81, and Ser-84. Residues 75 to 103 (RDRDGYSYGSRSGGGGYSSRRTSGRDKYG) are disordered. The region spanning 110–183 (YRLIVENLSS…RNIRLIEDKP (74 aa)) is the RRM 2 domain. Lys-165 bears the N6-acetyllysine mark. Residues 176–344 (IRLIEDKPRT…RSRSRSSSRD (169 aa)) form a disordered region. Lys-182 is covalently cross-linked (Glycyl lysine isopeptide (Lys-Gly) (interchain with G-Cter in SUMO2)). A compositionally biased stretch (basic residues) spans 185–250 (TSHRRSYSGS…RKSRSKSKSK (66 aa)). Basic and acidic residues-rich tracts occupy residues 264 to 273 (RSKDEYEKSR) and 280 to 291 (SPKENGKGDIKS). Residues Ser-297 and Ser-299 each carry the phosphoserine modification. At Ser-303 the chain carries Phosphoserine; by DYRK1A. Residues Ser-314 and Ser-316 each carry the phosphoserine modification. Residues 322 to 344 (ATSRSRSRSRSKSRSRSRSSSRD) are compositionally biased toward basic residues.

This sequence belongs to the splicing factor SR family. In terms of assembly, binds SREK1/SFRS12. Interacts with DYRK1A. Extensively phosphorylated on serine residues in the RS domain. Phosphorylated by DYRK1A, probably in the RS domain. Phosphorylation by DYRK1A modulates alternative splice site selection and inhibits the expression of MAPT/Tau exon 10.

The protein resides in the nucleus. Its subcellular location is the nucleus speckle. Its function is as follows. Plays a role in constitutive splicing and modulates the selection of alternative splice sites. Plays a role in the alternative splicing of MAPT/Tau exon 10. Binds to alternative exons of TNC pre-mRNA and promotes the expression of alternatively spliced TNC. Plays a role in wound healing and in the regulation of keratinocyte differentiation and proliferation via its role in alternative splicing. This chain is Serine/arginine-rich splicing factor 6 (SRSF6), found in Homo sapiens (Human).